Consider the following 608-residue polypeptide: Afamin (608 aa).

The first 21 residues, 1-21, serve as a signal peptide directing secretion; the sequence is MRHLKLTGFIFFLLPLTESLA. 3 consecutive Albumin domains span residues 22–210, 211–403, and 404–599; these read LPTK…APIT, QYLK…KFNE, and TTQR…KTGD. A glycan (N-linked (GlcNAc...) asparagine) is linked at Asn33. 11 disulfides stabilise this stretch: Cys77–Cys86, Cys99–Cys114, Cys113–Cys124, Cys148–Cys193, Cys192–Cys201, Cys224–Cys270, Cys269–Cys277, Cys289–Cys303, Cys302–Cys313, Cys340–Cys385, and Cys384–Cys393. A glycan (N-linked (GlcNAc...) asparagine) is linked at Asn109. N-linked (GlcNAc...) asparagine glycosylation occurs at Asn153. The binding pocket for hydrophobic ligands stretch occupies residues 215-319; that stretch reads ASSSYQRNVC…REACIINANK (105 aa). N-linked (GlcNAc...) asparagine glycosylation occurs at Asn402. Disulfide bonds link Cys416-Cys462, Cys461-Cys470, Cys483-Cys499, Cys498-Cys509, and Cys580-Cys589. Residue Asn488 is glycosylated (N-linked (GlcNAc...) asparagine). A disordered region spans residues 583-608; the sequence is VQEPESCFSPESSKTGDESQATEKQR. The segment covering 596-608 has biased composition (basic and acidic residues); that stretch reads KTGDESQATEKQR.

It belongs to the ALB/AFP/VDB family. In terms of assembly, forms a 1:1 complex with Wnt family members; interacts with WNT1, WNT2B, WNT3, WNT5A, WNT7A, WNT7B, WNT8, WNT9A, WNT9B, WNT10A and WNT10B. Interacts with WNT3A. In terms of processing, N-glycosylated; more than 90% of the glycans are sialylated. Detected in brain, especially on brain capillaries (at protein level). Expressed in isolated brain capillaries.

The protein localises to the secreted. Functions as a carrier for hydrophobic molecules in body fluids. Essential for the solubility and activity of lipidated Wnt family members, including WNT1, WNT2B, WNT3, WNT3A, WNT5A, WNT7A, WNT7B, WNT8, WNT9A, WNT9B, WNT10A and WNT10B. Binds vitamin E. May transport vitamin E in body fluids under conditions where the lipoprotein system is not sufficient. May be involved in the transport of vitamin E across the blood-brain barrier. The polypeptide is Afamin (Afm) (Mus musculus (Mouse)).